The following is a 339-amino-acid chain: Dihydroorotate dehydrogenase (quinone) (339 aa).

FMN contacts are provided by residues 62-66 (AGMDK) and threonine 86. Substrate is bound at residue lysine 66. 111-115 (NRMGF) provides a ligand contact to substrate. FMN-binding residues include asparagine 139 and asparagine 172. Asparagine 172 provides a ligand contact to substrate. Catalysis depends on serine 175, which acts as the Nucleophile. Asparagine 177 contributes to the substrate binding site. The FMN site is built by lysine 217 and threonine 245. Residue 246 to 247 (NT) coordinates substrate. FMN is bound by residues glycine 268, glycine 297, and 318–319 (YS).

The protein belongs to the dihydroorotate dehydrogenase family. Type 2 subfamily. As to quaternary structure, monomer. FMN is required as a cofactor.

The protein resides in the cell membrane. It catalyses the reaction (S)-dihydroorotate + a quinone = orotate + a quinol. The protein operates within pyrimidine metabolism; UMP biosynthesis via de novo pathway; orotate from (S)-dihydroorotate (quinone route): step 1/1. Functionally, catalyzes the conversion of dihydroorotate to orotate with quinone as electron acceptor. The sequence is that of Dihydroorotate dehydrogenase (quinone) from Shewanella putrefaciens (strain CN-32 / ATCC BAA-453).